The sequence spans 417 residues: MGRRRGVELYRAPFPLYALRIDPKTGLLIAAGGGGAAKTGIKNGVHFLQLEQISGCLSASLLHSHDTETRATMNLALAGDILAAGQDAQCQLLRFQIHQQKGSKAEKSGSKEQGPRQRKGAAPAEKKSGAEVHPEGVELKVKNLEAVQTDFSTEPLQKVVCFNHDNTLLATGGSDGHVRVWKVPSLEKVLEFKAHEGEIGDLALGPDGKLVTVGWDFKASVWQKDQLVTQLQWQENGPTSSNTPYRYQACRFGQVPDQPGGLRLFTVQIPHKRLRQPPPCYLTAWDSSTFLPLQTRSCGHEVISCLTVSESGTFLGLGTVTGSVAIYIAFSLQRLYYVKEAHGIVVTDVTFLPEKGCGPKLLGPHETALFSVAVDSRCQLHLLPSRRSVPVWLLLLLCVGLIIVTILLLQSAFPGFL.

Residues 1–388 (MGRRRGVELY…QLHLLPSRRS (388 aa)) lie on the Cytoplasmic side of the membrane. Y10 carries the 3'-nitrotyrosine modification. The interval 101 to 135 (KGSKAEKSGSKEQGPRQRKGAAPAEKKSGAEVHPE) is disordered. Basic and acidic residues-rich tracts occupy residues 103-115 (SKAEKSGSKEQGP) and 124-135 (AEKKSGAEVHPE). 3 WD repeats span residues 152–191 (STEPLQKVVCFNHDNTLLATGGSDGHVRVWKVPSLEKVLE), 194–232 (AHEGEIGDLALGPDGKLVTVGWDFKASVWQKDQLVTQLQ), and 298–337 (CGHEVISCLTVSESGTFLGLGTVTGSVAIYIAFSLQRLYY). A helical transmembrane segment spans residues 389-409 (VPVWLLLLLCVGLIIVTILLL). Residues 410 to 417 (QSAFPGFL) lie on the Lumenal side of the membrane.

As to quaternary structure, interacts with SAR1B (GDP-bound form). Interacts with MIA2; recruits PREB to endoplasmic reticulum exit sites. Interacts with CIDEB; facilitating loading of SCAP-SREBP into COPII vesicles.

It is found in the endoplasmic reticulum membrane. The protein resides in the nucleus. In terms of biological role, guanine nucleotide exchange factor (GEF) that regulates the assembly of the coat protein complex II/COPII in endoplasmic reticulum (ER) to Golgi vesicle-mediated transport. Selectively activates SAR1A and SAR1B by promoting the exchange of guanosine diphosphate (GDP) for guanosine triphosphate (GTP) in these small GTPases. In their activated GTP-bound state, SAR1A and SAR1B insert into the membrane of the endoplasmic reticulum where they recruit the remainder of the coat protein complex II/COPII which is responsible for both the sorting of proteins and the deformation and budding of membranes into vesicles destined to the Golgi. Was first identified based on its probable role in the regulation of pituitary gene transcription. Binds to the prolactin gene (PRL) promoter and seems to activate transcription. In Rattus norvegicus (Rat), this protein is Guanine nucleotide-exchange factor SEC12.